A 554-amino-acid chain; its full sequence is Serine/threonine-protein phosphatase 2B catalytic subunit (554 aa).

Residues Asp119, His121, and Asp147 each contribute to the Fe cation site. The Zn(2+) site is built by Asp147 and Asn179. Residue His180 is the Proton donor of the active site. The Zn(2+) site is built by His228 and His310. The disordered stretch occupies residues Leu411–Gln433. The segment covering Ala415 to Glu426 has biased composition (polar residues).

The protein belongs to the PPP phosphatase family. PP-2B subfamily. Composed of two components (A and B), the A component is the catalytic subunit and the B component confers calcium sensitivity. Fe(3+) serves as cofactor. Zn(2+) is required as a cofactor.

It carries out the reaction O-phospho-L-seryl-[protein] + H2O = L-seryl-[protein] + phosphate. The enzyme catalyses O-phospho-L-threonyl-[protein] + H2O = L-threonyl-[protein] + phosphate. Calcium-dependent, calmodulin-stimulated protein phosphatase. This subunit may have a role in the calmodulin activation of calcineurin. Appears to be involved in cytokinesis, mating, transport, nuclear and spindle pole body positioning, and cell shape. The chain is Serine/threonine-protein phosphatase 2B catalytic subunit (ppb1) from Schizosaccharomyces pombe (strain 972 / ATCC 24843) (Fission yeast).